Reading from the N-terminus, the 551-residue chain is Cytochrome c oxidase subunit 1 (551 aa).

A helical transmembrane segment spans residues 34–54; that stretch reads TLYLYSGVWGGLFGASLSLMI. Gly-62 contacts Ca(2+). His-79 is a binding site for Fe(II)-heme a. Helical transmembrane passes span 81-101, 126-146, 163-183, 209-229, 252-272, and 285-305; these read LMMIFFAVMPILIEAFGNWLI, ALYLLMLSFSTDKGVGAGWTI, VLIVSLHLAGLSSLVGAINFA, TAVLLIISIPVLGGGITMILF, LFWFFGHPEVYILILPAFGVM, and VFGLIGMVYAMIGIGGLGCMV. His-258 contributes to the Cu cation binding site. Positions 258 to 262 form a cross-link, 1'-histidyl-3'-tyrosine (His-Tyr); that stretch reads HPEVY. An O2-binding site is contributed by Tyr-262. The Cu cation site is built by His-308 and His-309. Transmembrane regions (helical) follow at residues 326–346 and 356–376; these read ATMVIAVPTGVKVFSWLATMA and AYWSTGFLFLFTVGGLTGVLL. 2 residues coordinate Mg(2+): His-386 and Asp-387. Helical transmembrane passes span 391–411, 432–452, and 475–495; these read VVAHFHYVLSMGAVFGVFCGL, FMAMFFGVNTTFFPQHFLGLS, and GSAVSFGSLMYFKFLLWEALV. His-394 is a binding site for heme a3. A Fe(II)-heme a-binding site is contributed by His-396.

The protein belongs to the heme-copper respiratory oxidase family. In terms of assembly, component of the cytochrome c oxidase (complex IV, CIV), a multisubunit enzyme composed of a catalytic core of 3 subunits and several supernumerary subunits. The complex exists as a monomer or a dimer and forms supercomplexes (SCs) in the inner mitochondrial membrane with ubiquinol-cytochrome c oxidoreductase (cytochrome b-c1 complex, complex III, CIII). The cofactor is heme. Requires Cu cation as cofactor.

The protein resides in the mitochondrion inner membrane. It catalyses the reaction 4 Fe(II)-[cytochrome c] + O2 + 8 H(+)(in) = 4 Fe(III)-[cytochrome c] + 2 H2O + 4 H(+)(out). The protein operates within energy metabolism; oxidative phosphorylation. Functionally, component of the cytochrome c oxidase, the last enzyme in the mitochondrial electron transport chain which drives oxidative phosphorylation. The respiratory chain contains 3 multisubunit complexes succinate dehydrogenase (complex II, CII), ubiquinol-cytochrome c oxidoreductase (cytochrome b-c1 complex, complex III, CIII) and cytochrome c oxidase (complex IV, CIV), that cooperate to transfer electrons derived from NADH and succinate to molecular oxygen, creating an electrochemical gradient over the inner membrane that drives transmembrane transport and the ATP synthase. Cytochrome c oxidase is the component of the respiratory chain that catalyzes the reduction of oxygen to water. Electrons originating from reduced cytochrome c in the intermembrane space (IMS) are transferred via the dinuclear copper A center (CU(A)) of subunit 2 and heme A of subunit 1 to the active site in subunit 1, a binuclear center (BNC) formed by heme A3 and copper B (CU(B)). The BNC reduces molecular oxygen to 2 water molecules using 4 electrons from cytochrome c in the IMS and 4 protons from the mitochondrial matrix. The protein is Cytochrome c oxidase subunit 1 (COI) of Mytilus edulis (Blue mussel).